The sequence spans 352 residues: Photosystem II D2 protein (352 aa).

Threonine 2 is modified (N-acetylthreonine). The residue at position 2 (threonine 2) is a Phosphothreonine. The helical transmembrane segment at 40 to 60 threads the bilayer; that stretch reads CAYFAVGGWLTGTTFVTSWYT. Histidine 117 contacts chlorophyll a. A helical transmembrane segment spans residues 124 to 140; the sequence is GFMLRQFEIARAIGLRP. Residues glutamine 129 and asparagine 142 each coordinate pheophytin a. Residues 152–165 form a helical membrane-spanning segment; sequence VFVSVFLIYPLGQS. Histidine 197 contacts chlorophyll a. A helical membrane pass occupies residues 207 to 227; it reads AALLCAIHGATVENTLFEDGD. Positions 214 and 261 each coordinate a plastoquinone. Residue histidine 214 coordinates Fe cation. Residue histidine 268 coordinates Fe cation. Residues 278–294 traverse the membrane as a helical segment; that stretch reads GLWMSAIGVVGLALNLR.

The protein belongs to the reaction center PufL/M/PsbA/D family. In terms of assembly, PSII is composed of 1 copy each of membrane proteins PsbA, PsbB, PsbC, PsbD, PsbE, PsbF, PsbH, PsbI, PsbJ, PsbK, PsbL, PsbM, PsbT, PsbX, PsbY, PsbZ, Psb30/Ycf12, at least 3 peripheral proteins of the oxygen-evolving complex and a large number of cofactors. It forms dimeric complexes. It depends on The D1/D2 heterodimer binds P680, chlorophylls that are the primary electron donor of PSII, and subsequent electron acceptors. It shares a non-heme iron and each subunit binds pheophytin, quinone, additional chlorophylls, carotenoids and lipids. There is also a Cl(-1) ion associated with D1 and D2, which is required for oxygen evolution. The PSII complex binds additional chlorophylls, carotenoids and specific lipids. as a cofactor.

The protein resides in the plastid. It localises to the chloroplast thylakoid membrane. It carries out the reaction 2 a plastoquinone + 4 hnu + 2 H2O = 2 a plastoquinol + O2. Functionally, photosystem II (PSII) is a light-driven water:plastoquinone oxidoreductase that uses light energy to abstract electrons from H(2)O, generating O(2) and a proton gradient subsequently used for ATP formation. It consists of a core antenna complex that captures photons, and an electron transfer chain that converts photonic excitation into a charge separation. The D1/D2 (PsbA/PsbD) reaction center heterodimer binds P680, the primary electron donor of PSII as well as several subsequent electron acceptors. D2 is needed for assembly of a stable PSII complex. This is Photosystem II D2 protein from Nephroselmis olivacea (Green alga).